The primary structure comprises 206 residues: Large ribosomal subunit protein uL4 (206 aa).

Residues Lys44–Gly87 form a disordered region. Basic residues predominate over residues Gly60 to Gly71.

Belongs to the universal ribosomal protein uL4 family. In terms of assembly, part of the 50S ribosomal subunit.

Functionally, one of the primary rRNA binding proteins, this protein initially binds near the 5'-end of the 23S rRNA. It is important during the early stages of 50S assembly. It makes multiple contacts with different domains of the 23S rRNA in the assembled 50S subunit and ribosome. Forms part of the polypeptide exit tunnel. This chain is Large ribosomal subunit protein uL4, found in Agathobacter rectalis (strain ATCC 33656 / DSM 3377 / JCM 17463 / KCTC 5835 / VPI 0990) (Eubacterium rectale).